Here is a 434-residue protein sequence, read N- to C-terminus: Urokinase-type plasminogen activator (434 aa).

The first 20 residues, 1 to 20, serve as a signal peptide directing secretion; it reads MKLIIFLTVTLCTLVTGLDS. Positions 36–72 constitute an EGF-like domain; the sequence is QHRECQCLNGGTCITYRFFSQIKRCLCPEGYGGLHCE. 12 cysteine pairs are disulfide-bonded: cysteine 40-cysteine 48, cysteine 42-cysteine 60, cysteine 62-cysteine 71, cysteine 79-cysteine 158, cysteine 96-cysteine 139, cysteine 128-cysteine 152, cysteine 162-cysteine 296, cysteine 202-cysteine 218, cysteine 210-cysteine 285, cysteine 310-cysteine 379, cysteine 342-cysteine 358, and cysteine 369-cysteine 397. A Kringle domain is found at 79–158; it reads CYSGNGEDYR…ETPCSTIEKC (80 aa). Positions 159 to 172 are connecting peptide; sequence ERTCGQRSFSKYFK. The 249-residue stretch at 173-421 folds into the Peptidase S1 domain; it reads IVGGSQAEVE…YLNWIDSNMN (249 aa). Histidine 217 serves as the catalytic Charge relay system. Asparagine 228 carries an N-linked (GlcNAc...) asparagine glycan. Aspartate 272 acts as the Charge relay system in catalysis. Serine 373 (charge relay system) is an active-site residue.

This sequence belongs to the peptidase S1 family.

It is found in the secreted. It carries out the reaction Specific cleavage of Arg-|-Val bond in plasminogen to form plasmin.. Functionally, specifically cleaves the zymogen plasminogen to form the active enzyme plasmin. This is Urokinase-type plasminogen activator (PLAU) from Gallus gallus (Chicken).